We begin with the raw amino-acid sequence, 89 residues long: Large ribosomal subunit protein bL27 (89 aa).

The tract at residues 1–26 (MAHKKAGGSSRNGRDSAGQRRGVKRF) is disordered.

It belongs to the bacterial ribosomal protein bL27 family.

This chain is Large ribosomal subunit protein bL27, found in Nitratidesulfovibrio vulgaris (strain DSM 19637 / Miyazaki F) (Desulfovibrio vulgaris).